Reading from the N-terminus, the 294-residue chain is Homeobox-leucine zipper protein ATHB-16 (294 aa).

Polar residues predominate over residues 1–20 (MKRLSSSDSMCGLISTSTDE). A disordered region spans residues 1 to 31 (MKRLSSSDSMCGLISTSTDEQSPRGYGSNYQ). The segment at residues 56–115 (LSEKKRRLKVDQVKALEKNFELENKLEPERKTKLAQELGLQPRQVAVWFQNRRARWKTKQ) is a DNA-binding region (homeobox). Positions 116-151 (LEKDYGVLKGQYDSLRHNFDSLRRDNDSLLQEISKI) are leucine-zipper. Residues 219 to 238 (SSDSCDSSAVLNDETSSDNG) show a composition bias toward polar residues. The tract at residues 219-241 (SSDSCDSSAVLNDETSSDNGRLT) is disordered.

The protein belongs to the HD-ZIP homeobox family. Class I subfamily. In terms of tissue distribution, widely expressed with a lower level in siliques.

The protein resides in the nucleus. In terms of biological role, probable transcription factor that may function as a negative regulator of the flowering time response to photoperiod. May act to repress cell expansion during plant development. This is Homeobox-leucine zipper protein ATHB-16 (ATHB-16) from Arabidopsis thaliana (Mouse-ear cress).